Consider the following 431-residue polypeptide: Adenylosuccinate synthetase (431 aa).

GTP-binding positions include G12–K18 and G40–T42. The active-site Proton acceptor is D13. Positions 13 and 40 each coordinate Mg(2+). Residues D13–K16, N38–H41, T131, R145, Q225, T240, and R304 each bind IMP. The active-site Proton donor is the H41. A substrate-binding site is contributed by T300–R306. GTP is bound by residues R306, K332–D334, and S414–S416.

The protein belongs to the adenylosuccinate synthetase family. Homodimer. Mg(2+) serves as cofactor.

Its subcellular location is the cytoplasm. The catalysed reaction is IMP + L-aspartate + GTP = N(6)-(1,2-dicarboxyethyl)-AMP + GDP + phosphate + 2 H(+). It functions in the pathway purine metabolism; AMP biosynthesis via de novo pathway; AMP from IMP: step 1/2. Functionally, plays an important role in the de novo pathway of purine nucleotide biosynthesis. Catalyzes the first committed step in the biosynthesis of AMP from IMP. This Dinoroseobacter shibae (strain DSM 16493 / NCIMB 14021 / DFL 12) protein is Adenylosuccinate synthetase.